The sequence spans 141 residues: ATP synthase epsilon chain (141 aa).

This sequence belongs to the ATPase epsilon chain family. F-type ATPases have 2 components, CF(1) - the catalytic core - and CF(0) - the membrane proton channel. CF(1) has five subunits: alpha(3), beta(3), gamma(1), delta(1), epsilon(1). CF(0) has three main subunits: a, b and c.

It localises to the cell inner membrane. In terms of biological role, produces ATP from ADP in the presence of a proton gradient across the membrane. The chain is ATP synthase epsilon chain from Paraburkholderia phymatum (strain DSM 17167 / CIP 108236 / LMG 21445 / STM815) (Burkholderia phymatum).